Reading from the N-terminus, the 121-residue chain is Large ribosomal subunit protein uL14 (121 aa).

It belongs to the universal ribosomal protein uL14 family. In terms of assembly, part of the 50S ribosomal subunit. Forms a cluster with proteins L3 and L19. In the 70S ribosome, L14 and L19 interact and together make contacts with the 16S rRNA in bridges B5 and B8.

Its function is as follows. Binds to 23S rRNA. Forms part of two intersubunit bridges in the 70S ribosome. In Aquifex aeolicus (strain VF5), this protein is Large ribosomal subunit protein uL14.